Reading from the N-terminus, the 236-residue chain is MEPIYEGKAKRLYTTDNPNVLRMEYKDDATAGNGAKKAQFENKGRMNKAITLVIYRMLESKGVKTHLVADVDDINIDVKKVSILPLEVIVRNIAAGSFSRRMGVKEGTPFKKPIVEFSYKDDSLGDPFINDDYAREMNAATEEECVFLKNQARIVNDVLIDFFKQVGLTLVDFKIEFGRLAEDPSQIVLADEISPDTCRLWDIKTGEKMDKDRFRQDLGNVMEAYEEVLSRLQNKA.

Belongs to the SAICAR synthetase family.

The enzyme catalyses 5-amino-1-(5-phospho-D-ribosyl)imidazole-4-carboxylate + L-aspartate + ATP = (2S)-2-[5-amino-1-(5-phospho-beta-D-ribosyl)imidazole-4-carboxamido]succinate + ADP + phosphate + 2 H(+). Its pathway is purine metabolism; IMP biosynthesis via de novo pathway; 5-amino-1-(5-phospho-D-ribosyl)imidazole-4-carboxamide from 5-amino-1-(5-phospho-D-ribosyl)imidazole-4-carboxylate: step 1/2. This Akkermansia muciniphila (strain ATCC BAA-835 / DSM 22959 / JCM 33894 / BCRC 81048 / CCUG 64013 / CIP 107961 / Muc) protein is Phosphoribosylaminoimidazole-succinocarboxamide synthase.